A 150-amino-acid polypeptide reads, in one-letter code: Cytochrome c-type biogenesis protein CcmE (150 aa).

Over 1–7 (MTRKQKR) the chain is Cytoplasmic. The helical; Signal-anchor for type II membrane protein transmembrane segment at 8 to 28 (LAIIGGGVAFLTAAVLLVMFA) threads the bilayer. Topologically, residues 29–150 (FSQAVAYFYV…VTLGGEENIR (122 aa)) are periplasmic. Heme is bound by residues histidine 123 and tyrosine 127.

It belongs to the CcmE/CycJ family.

It localises to the cell inner membrane. Functionally, heme chaperone required for the biogenesis of c-type cytochromes. Transiently binds heme delivered by CcmC and transfers the heme to apo-cytochromes in a process facilitated by CcmF and CcmH. In Rhizobium meliloti (strain 1021) (Ensifer meliloti), this protein is Cytochrome c-type biogenesis protein CcmE.